We begin with the raw amino-acid sequence, 418 residues long: Glutamyl-tRNA reductase (418 aa).

Substrate is bound by residues 49 to 52, S109, 114 to 116, and Q120; these read TCNR and EPQ. C50 functions as the Nucleophile in the catalytic mechanism. 189 to 194 contacts NADP(+); it reads GAGETI.

The protein belongs to the glutamyl-tRNA reductase family. Homodimer.

It carries out the reaction (S)-4-amino-5-oxopentanoate + tRNA(Glu) + NADP(+) = L-glutamyl-tRNA(Glu) + NADPH + H(+). It participates in porphyrin-containing compound metabolism; protoporphyrin-IX biosynthesis; 5-aminolevulinate from L-glutamyl-tRNA(Glu): step 1/2. Functionally, catalyzes the NADPH-dependent reduction of glutamyl-tRNA(Glu) to glutamate 1-semialdehyde (GSA). In Escherichia coli O7:K1 (strain IAI39 / ExPEC), this protein is Glutamyl-tRNA reductase.